Reading from the N-terminus, the 163-residue chain is Acetolactate synthase isozyme 3 small subunit (163 aa).

The ACT domain occupies 4–78; sequence ILSVLLENES…DVLRVSELGQ (75 aa).

Belongs to the acetolactate synthase small subunit family. Dimer of large and small chains.

The enzyme catalyses 2 pyruvate + H(+) = (2S)-2-acetolactate + CO2. It functions in the pathway amino-acid biosynthesis; L-isoleucine biosynthesis; L-isoleucine from 2-oxobutanoate: step 1/4. Its pathway is amino-acid biosynthesis; L-valine biosynthesis; L-valine from pyruvate: step 1/4. With respect to regulation, sensitive to valine inhibition. This Escherichia coli (strain K12) protein is Acetolactate synthase isozyme 3 small subunit (ilvH).